Consider the following 752-residue polypeptide: Microtubule-associated protein tau (752 aa).

Positions 1-567 (MAEPRQEFDT…PVPMPDLKNV (567 aa)) are disordered. Position 2 is an N-acetylalanine (A2). Y18 is modified (phosphotyrosine). Residue K33 forms a Glycyl lysine isopeptide (Lys-Gly) (interchain with G-Cter in ubiquitin) linkage. Phosphoserine is present on residues S35 and S50. Over residues 50 to 60 (SETSDAKSTPT) the composition is skewed to polar residues. Phosphothreonine is present on residues T58, T60, and T100. Over residues 142-151 (SDWTHQQVPS) the composition is skewed to polar residues. The segment covering 173 to 182 (RPEDVERSHP) has biased composition (basic and acidic residues). Phosphoserine occurs at positions 191 and 204. Basic and acidic residues predominate over residues 192–204 (PQKEAWGKDRLGS). The span at 205–218 (EEEVDEDITMDESS) shows a compositional bias: acidic residues. The segment covering 219–229 (QESPPSQASLA) has biased composition (low complexity). The segment covering 233–252 (ATPQARSVSASGVSGETTSI) has biased composition (polar residues). Basic and acidic residues-rich tracts occupy residues 289-313 (EEGHEAAPEFTFHVEIKASAPKEQD) and 374-385 (SKDRTGNDEKKA). Composition is skewed to polar residues over residues 387-400 (TSTPSCAKTPSNRP) and 432-446 (KYVSSVTPRNGSPGT). T464 carries the post-translational modification Phosphothreonine. R466 carries the post-translational modification Omega-N-methylarginine. Residue K474 is modified to N6,N6-dimethyllysine; alternate. Position 474 is an N6-acetyllysine; alternate (K474). A phosphothreonine mark is found at T480, T486, and T487. Position 489 is a phosphoserine (S489). T492 bears the Phosphothreonine mark. Phosphoserine is present on residues S496, S502, and S506. Residues 498-525 (EPPKSGERSGYSSPGSPGTPGSRSRTPS) show a composition bias toward low complexity. A Phosphotyrosine modification is found at Y508. 2 positions are modified to phosphoserine: S509 and S510. Phosphoserine; by CK1, PDPK1 and TTBK1 is present on S513. Residues T516 and T523 each carry the phosphothreonine modification. S525 is subject to Phosphoserine. T528 bears the Phosphothreonine mark. N6-acetyllysine is present on K536. Phosphothreonine is present on T542. S546 and S548 each carry phosphoserine. 4 Tau/MAP repeats span residues 555-585 (QTAPVPMPDLKNVRSKIGSTENLKHQPGGGK), 586-616 (VQIINKKLDLSNVQSKCGSKDNIKHVPGGGS), 617-647 (VHIVYKPVDLSKVTSKCGSLGNIHHKPGGGQ), and 648-679 (VEVKSEKLDFKDRVQSKIGSLDNITHVPGGGN). A Glycyl lysine isopeptide (Lys-Gly) (interchain with G-Cter in ubiquitin) cross-link involves residue K565. K570 bears the N6-acetyllysine; alternate mark. Residue K570 is modified to N6-methyllysine; alternate. K570 is covalently cross-linked (Glycyl lysine isopeptide (Lys-Gly) (interchain with G-Cter in ubiquitin); alternate). A Phosphoserine modification is found at S573. K578 participates in a covalent cross-link: Glycyl lysine isopeptide (Lys-Gly) (interchain with G-Cter in ubiquitin). Position 592 is an N6-acetyllysine; alternate (K592). A Glycyl lysine isopeptide (Lys-Gly) (interchain with G-Cter in ubiquitin); alternate cross-link involves residue K592. Phosphoserine occurs at positions 596 and 600. K601 bears the N6-acetyllysine mark. A disulfide bond links C602 and C633. S604 is subject to Phosphoserine. Residue K609 is modified to N6-acetyllysine; alternate. Residue K609 forms a Glycyl lysine isopeptide (Lys-Gly) (interchain with G-Cter in ubiquitin); alternate linkage. Phosphoserine is present on S616. K622 bears the N6,N6-dimethyllysine; alternate mark. N6-acetyllysine; alternate is present on residues K622, K628, and K632. Residues K622, K628, and K632 each participate in a glycyl lysine isopeptide (Lys-Gly) (interchain with G-Cter in ubiquitin); alternate cross-link. A Phosphoserine modification is found at S635. Residues K642, K654, and K658 each carry the N6-acetyllysine; alternate modification. Glycyl lysine isopeptide (Lys-Gly) (interchain with G-Cter in ubiquitin); alternate cross-links involve residues K642, K654, and K658. Omega-N-methylarginine is present on R660. S663 is subject to Phosphoserine. A Glycyl lysine isopeptide (Lys-Gly) (interchain with G-Cter in ubiquitin) cross-link involves residue K664. Phosphoserine is present on S667. Residue K680 is modified to N6-acetyllysine; alternate. Residue K680 forms a Glycyl lysine isopeptide (Lys-Gly) (interchain with G-Cter in ubiquitin); alternate linkage. K686 is covalently cross-linked (Glycyl lysine isopeptide (Lys-Gly) (interchain with G-Cter in ubiquitin)). Position 696 is an N6-acetyllysine; alternate (K696). K696 participates in a covalent cross-link: Glycyl lysine isopeptide (Lys-Gly) (interchain with G-Cter in ubiquitin); alternate. Y705 bears the Phosphotyrosine mark. S707 is subject to Phosphoserine; by CK1 and PDPK1. S711 carries the post-translational modification Phosphoserine. Phosphothreonine is present on T714. S715 carries the post-translational modification Phosphoserine; by CK1 and PDPK1. Phosphoserine occurs at positions 720, 727, and 733. Position 738 is a phosphothreonine (T738).

In terms of assembly, interacts with MARK1, MARK2, MARK3 and MARK4. Interacts with SQSTM1 when polyubiquitinated. Interacts with PSMC2 through SQSTM1. Interacts with FKBP4. Binds to CSNK1D. Interacts with SGK1. Interacts with EPM2A; the interaction dephosphorylates MAPT at Ser-388. Interacts with PIN1. Interacts with LRRK2. Interacts with LRP1, leading to endocytosis; this interaction is reduced in the presence of LRPAP1/RAP. Post-translationally, polyubiquitinated. Requires functional TRAF6 and may provoke SQSTM1-dependent degradation by the proteasome. Phosphorylated at various serine and threonine residues in S-P or T-P motifs by proline-directed protein kinases (PDPK1, CDK1, CDK5, GSK3, MAPK) (a few sites per protein in interphase, more in mitosis), and at serine residues in K-X-G-S motifs by MAP/microtubule affinity-regulating kinase (MARK1, MARK2, MARK3, MARK4), causing detachment from microtubules, and their disassembly. Fetal Tau is much more phosphorylated than adult Tau. Phosphorylation at Ser-573 by BRSK1 and BRSK2 in neurons affects ability to bind microtubules and plays a role in neuron polarization. Phosphorylated by PHK. Dephosphorylation at several serine and threonine residues by the serine/threonine phosphatase PPP5C. Phosphorylation at Ser-204 by SGK1 mediates microtubule depolymerization and neurite formation in hippocampal neurons. As to expression, expressed in neurons. The larger forms (isoform tau-A and isoform tau-B) are preferentially expressed in the peripheral nervous system while the other are expressed in the central nervous system. Low amounts of the larger forms are also found in limited areas of the CNS.

Its subcellular location is the cytoplasm. The protein resides in the cytosol. It localises to the cell membrane. The protein localises to the cytoskeleton. It is found in the cell projection. Its subcellular location is the axon. The protein resides in the dendrite. It localises to the secreted. Promotes microtubule assembly and stability, and might be involved in the establishment and maintenance of neuronal polarity. The C-terminus binds axonal microtubules while the N-terminus binds neural plasma membrane components, suggesting that tau functions as a linker protein between both. Axonal polarity is predetermined by tau localization (in the neuronal cell) in the domain of the cell body defined by the centrosome. The short isoforms allow plasticity of the cytoskeleton whereas the longer isoforms may preferentially play a role in its stabilization. The polypeptide is Microtubule-associated protein tau (Rattus norvegicus (Rat)).